The following is a 71-amino-acid chain: Small ribosomal subunit protein bS21 (71 aa).

This sequence belongs to the bacterial ribosomal protein bS21 family.

This chain is Small ribosomal subunit protein bS21, found in Shewanella piezotolerans (strain WP3 / JCM 13877).